A 280-amino-acid polypeptide reads, in one-letter code: Feruloyl esterase 1 (280 aa).

An N-terminal signal peptide occupies residues 1 to 20; it reads MKAFATRALAFSVAAGQALA. 3 disulfides stabilise this stretch: Cys49-Cys278, Cys111-Cys114, and Cys247-Cys254. A glycan (N-linked (GlcNAc...) asparagine) is linked at Asn99. The active-site Nucleophile is Ser153. Asp214 acts as the Charge relay system in catalysis. Residue His267 is the Charge relay system of the active site.

This sequence belongs to the AB hydrolase superfamily. FaeA family. Glycosylated.

Its subcellular location is the secreted. The catalysed reaction is feruloyl-polysaccharide + H2O = ferulate + polysaccharide.. Its activity is regulated as follows. Metal or basic ions Mn(2+), Ni(+), Mg(2+), and NH(4)(+) decrease the activity by 4.4% to 14.1%. The enzymatic activity is inhibited by Zn(2+) at a low concentration (1 mM) but not a high concentration (5 mM). Loses about a quarter of activity by the addition of 1 mM of Cu(2+) or Fe(3+) and activity is completely suppressed when the concentration was up to 5 mM. Low concentrations (0.25 and 0.5 M) of NaCl improve the activity by 5.6 % or 8.3%, respectively. Functionally, involved in degradation of plant cell walls. Hydrolyzes the feruloyl-arabinose ester bond in arabinoxylans, and the feruloyl-galactose ester bond in pectin. This is Feruloyl esterase 1 from Penicillium parvum (Eupenicillium parvum).